Consider the following 663-residue polypeptide: Protein pat-12 (663 aa).

Residues 1-15 (MTSHIATETSVNRWS) show a composition bias toward polar residues. Disordered regions lie at residues 1-78 (MTSH…SGDY), 367-430 (RFEE…GQET), 517-546 (FRRG…DYRR), and 597-663 (PMPA…RRRR). The segment covering 367–380 (RFEETRRTEEVERR) has biased composition (basic and acidic residues). The segment covering 381 to 400 (VQRREKKERRSRHHSSSRHH) has biased composition (basic residues). Polar residues predominate over residues 517 to 526 (FRRGSQQQVS). Basic and acidic residues-rich tracts occupy residues 620-640 (FNKE…KPVD) and 649-663 (NYKR…RRRR).

In terms of assembly, interacts with vab-10 (via plankin domain). Isoform a: Expressed in the uterus, the vulva, the rectum, mechanosensory neurons and in head and tail neurons. Isoform e: Expressed in spermatheca and weakly in the vulva. Isoform f: Expressed in spermatheca and weakly in the vulva. Isoform i: Expressed in spermatheca and weakly in the vulva.

The protein localises to the apical cell membrane. The protein resides in the basal cell membrane. It localises to the cytoplasm. It is found in the cell junction. Its subcellular location is the hemidesmosome. The protein localises to the cell membrane. The protein resides in the cytoskeleton. Required for embryonic morphology and development. Plays both a functional and a structural role in the maintenance and probably biogenesis of fibrous organelles, a hemidesomosome-like junction structure, which ensures muscle stability and muscle connection to the external cuticle. The polypeptide is Protein pat-12 (Caenorhabditis elegans).